The primary structure comprises 434 residues: Methylenetetrahydrofolate--tRNA-(uracil-5-)-methyltransferase TrmFO (434 aa).

Residue 9–14 coordinates FAD; that stretch reads GAGLAG.

The protein belongs to the MnmG family. TrmFO subfamily. Requires FAD as cofactor.

It is found in the cytoplasm. It catalyses the reaction uridine(54) in tRNA + (6R)-5,10-methylene-5,6,7,8-tetrahydrofolate + NADH + H(+) = 5-methyluridine(54) in tRNA + (6S)-5,6,7,8-tetrahydrofolate + NAD(+). It carries out the reaction uridine(54) in tRNA + (6R)-5,10-methylene-5,6,7,8-tetrahydrofolate + NADPH + H(+) = 5-methyluridine(54) in tRNA + (6S)-5,6,7,8-tetrahydrofolate + NADP(+). In terms of biological role, catalyzes the folate-dependent formation of 5-methyl-uridine at position 54 (M-5-U54) in all tRNAs. The polypeptide is Methylenetetrahydrofolate--tRNA-(uracil-5-)-methyltransferase TrmFO (Listeria innocua serovar 6a (strain ATCC BAA-680 / CLIP 11262)).